Reading from the N-terminus, the 468-residue chain is Glutamate--tRNA ligase (468 aa).

A 'HIGH' region motif is present at residues 10-20 (PSPTGDLHIGG). Zn(2+) contacts are provided by Cys99, Cys101, Cys126, and Asp128. Positions 236–240 (RLSKR) match the 'KMSKS' region motif. Lys239 lines the ATP pocket.

This sequence belongs to the class-I aminoacyl-tRNA synthetase family. Glutamate--tRNA ligase type 1 subfamily. In terms of assembly, monomer. It depends on Zn(2+) as a cofactor.

It localises to the cytoplasm. It carries out the reaction tRNA(Glu) + L-glutamate + ATP = L-glutamyl-tRNA(Glu) + AMP + diphosphate. Catalyzes the attachment of glutamate to tRNA(Glu) in a two-step reaction: glutamate is first activated by ATP to form Glu-AMP and then transferred to the acceptor end of tRNA(Glu). The protein is Glutamate--tRNA ligase of Syntrophobacter fumaroxidans (strain DSM 10017 / MPOB).